Reading from the N-terminus, the 258-residue chain is UPF0246 protein ETA_07010 (258 aa).

The protein belongs to the UPF0246 family.

This Erwinia tasmaniensis (strain DSM 17950 / CFBP 7177 / CIP 109463 / NCPPB 4357 / Et1/99) protein is UPF0246 protein ETA_07010.